A 721-amino-acid polypeptide reads, in one-letter code: Polyribonucleotide nucleotidyltransferase (721 aa).

The Mg(2+) site is built by aspartate 495 and aspartate 501. In terms of domain architecture, KH spans 562-621 (PRITTIKIRPERIKDIIGPGGKTIKDITARTGTSINIEDDGSVSIASPNQDKVEEAIKMI). An S1 motif domain is found at 631–699 (GRIYLGTVRK…RSGKIRLSRK (69 aa)). Positions 699-721 (KEALADSAKKSEGTEPPKGEPAK) are disordered.

The protein belongs to the polyribonucleotide nucleotidyltransferase family. Requires Mg(2+) as cofactor.

The protein resides in the cytoplasm. It catalyses the reaction RNA(n+1) + phosphate = RNA(n) + a ribonucleoside 5'-diphosphate. Involved in mRNA degradation. Catalyzes the phosphorolysis of single-stranded polyribonucleotides processively in the 3'- to 5'-direction. The chain is Polyribonucleotide nucleotidyltransferase from Anaeromyxobacter dehalogenans (strain 2CP-1 / ATCC BAA-258).